The primary structure comprises 806 residues: Volume-regulated anion channel subunit LRRC8E (806 aa).

At 1–22 (MIPVAEFKQFTEQQPAFKVLKP) the chain is on the cytoplasmic side. Residues 23–43 (WWDVLAEYITYAMLMIGVFGC) form a helical membrane-spanning segment. The Extracellular portion of the chain corresponds to 44 to 130 (TLQVTQDKII…YETALHWYAK (87 aa)). An intrachain disulfide couples cysteine 54 to cysteine 311. N-linked (GlcNAc...) asparagine glycosylation is found at asparagine 57 and asparagine 80. The tract at residues 75–104 (QSSASNDSDLETTVPPPTATSSPPREMSGL) is disordered. The helical transmembrane segment at 131–151 (YFPYLVVIHTLIFIICGNFWF) threads the bilayer. At 152-275 (KFPGTSSKIE…MRQTVLKVCK (124 aa)) the chain is on the cytoplasmic side. The tract at residues 182–217 (EVSGESSQEKPNQERSIDRELSKPNFEEGSPATADL) is disordered. Basic and acidic residues predominate over residues 188–207 (SQEKPNQERSIDRELSKPNF). Residues 276–296 (FVLITIYNAVLVGKIHFIVPC) form a helical membrane-spanning segment. Residues 297-323 (SVHTEDMTGYNSFCCNHTKAHLFSKLA) are Extracellular-facing. An N-linked (GlcNAc...) asparagine glycan is attached at asparagine 312. Residues 324–344 (ISYLCFLGVYGLTCFYTLYWL) form a helical membrane-spanning segment. The Cytoplasmic segment spans residues 345 to 806 (FRRPLKEYSF…VDVRDKFKED (462 aa)). LRR repeat units follow at residues 569-589 (HLQK…NALK), 593-614 (LVKE…VFSL), 616-637 (NLQV…ISLQ), 641-662 (KLSV…IRKL), 664-685 (GLEE…LFLC), 687-708 (KLRH…IGVL), 710-731 (LLQY…LFFC), 733-754 (KLKT…VGSL), and 756-777 (CLVK…IGNC).

This sequence belongs to the LRRC8 family. As to quaternary structure, heterohexamer; oligomerizes with other LRRC8 proteins (lrrc8a, lrrc8c, lrrc8d and/or lrrc8b) to form a heterohexamer. Detected in a channel complex that contains lrrc8a, lrrc8c and lrrc8e. In vivo, the subunit composition may depend primarily on expression levels, and heterooligomeric channels containing various proportions of the different LRRC8 proteins may coexist.

Its subcellular location is the cell membrane. It localises to the endoplasmic reticulum membrane. The protein localises to the lysosome membrane. It carries out the reaction chloride(in) = chloride(out). It catalyses the reaction iodide(out) = iodide(in). The enzyme catalyses taurine(out) = taurine(in). The catalysed reaction is 2',3'-cGAMP(out) = 2',3'-cGAMP(in). Functionally, non-essential component of the volume-regulated anion channel (VRAC, also named VSOAC channel), an anion channel required to maintain a constant cell volume in response to extracellular or intracellular osmotic changes. The VRAC channel conducts iodide better than chloride and can also conduct organic osmolytes like taurine. Mediates efflux of amino acids, such as aspartate, in response to osmotic stress. The VRAC channel also mediates transport of immunoreactive cyclic dinucleotide GMP-AMP (2'-3'-cGAMP), an immune messenger produced in response to DNA virus in the cytosol. Channel activity requires lrrc8a plus at least one other family member (lrrc8b, lrrc8c, lrrc8d or lrrc8e); channel characteristics depend on the precise subunit composition. Also plays a role in lysosome homeostasis by forming functional lysosomal VRAC channels in response to low cytoplasmic ionic strength condition: lysosomal VRAC channels are necessary for the formation of large lysosome-derived vacuoles, which store and then expel excess water to maintain cytosolic water homeostasis. The polypeptide is Volume-regulated anion channel subunit LRRC8E (Xenopus laevis (African clawed frog)).